Reading from the N-terminus, the 396-residue chain is Elongation factor Tu (396 aa).

The tr-type G domain occupies 10-205 (KPHVNIGTIG…AVDESIPDPV (196 aa)). Positions 19-26 (GHVDHGKT) are G1. Residue 19–26 (GHVDHGKT) participates in GTP binding. Thr26 is a Mg(2+) binding site. Positions 62–66 (GITIN) are G2. The segment at 83-86 (DAPG) is G3. GTP contacts are provided by residues 83–87 (DAPGH) and 138–141 (NKAD). The segment at 138–141 (NKAD) is G4. Positions 175-177 (SAL) are G5.

This sequence belongs to the TRAFAC class translation factor GTPase superfamily. Classic translation factor GTPase family. EF-Tu/EF-1A subfamily. As to quaternary structure, monomer.

The protein localises to the cytoplasm. The enzyme catalyses GTP + H2O = GDP + phosphate + H(+). In terms of biological role, GTP hydrolase that promotes the GTP-dependent binding of aminoacyl-tRNA to the A-site of ribosomes during protein biosynthesis. This is Elongation factor Tu from Rhodococcus jostii (strain RHA1).